The sequence spans 1390 residues: DNA-directed RNA polymerase subunit beta (1390 aa).

The disordered stretch occupies residues 556 to 576; sequence KLADQDAENDPDSDLGTKSSN.

Belongs to the RNA polymerase beta chain family. As to quaternary structure, the RNAP catalytic core consists of 2 alpha, 1 beta, 1 beta' and 1 omega subunit. When a sigma factor is associated with the core the holoenzyme is formed, which can initiate transcription.

The catalysed reaction is RNA(n) + a ribonucleoside 5'-triphosphate = RNA(n+1) + diphosphate. Functionally, DNA-dependent RNA polymerase catalyzes the transcription of DNA into RNA using the four ribonucleoside triphosphates as substrates. This chain is DNA-directed RNA polymerase subunit beta, found in Mycoplasmoides gallisepticum (strain R(low / passage 15 / clone 2)) (Mycoplasma gallisepticum).